The sequence spans 504 residues: Histidine ammonia-lyase (504 aa).

The 5-imidazolinone (Ala-Gly) cross-link spans 142–144; sequence ASG. Ser143 is subject to 2,3-didehydroalanine (Ser).

Belongs to the PAL/histidase family. In terms of processing, contains an active site 4-methylidene-imidazol-5-one (MIO), which is formed autocatalytically by cyclization and dehydration of residues Ala-Ser-Gly.

The protein resides in the cytoplasm. The catalysed reaction is L-histidine = trans-urocanate + NH4(+). The protein operates within amino-acid degradation; L-histidine degradation into L-glutamate; N-formimidoyl-L-glutamate from L-histidine: step 1/3. The protein is Histidine ammonia-lyase of Staphylococcus aureus (strain bovine RF122 / ET3-1).